Here is a 459-residue protein sequence, read N- to C-terminus: UDP-N-acetylmuramate--L-alanine ligase (459 aa).

Residue 113–119 (GSHGKTT) participates in ATP binding.

Belongs to the MurCDEF family.

The protein localises to the cytoplasm. The enzyme catalyses UDP-N-acetyl-alpha-D-muramate + L-alanine + ATP = UDP-N-acetyl-alpha-D-muramoyl-L-alanine + ADP + phosphate + H(+). The protein operates within cell wall biogenesis; peptidoglycan biosynthesis. Its function is as follows. Cell wall formation. This is UDP-N-acetylmuramate--L-alanine ligase from Persephonella marina (strain DSM 14350 / EX-H1).